Here is a 410-residue protein sequence, read N- to C-terminus: Protein king tubby 2 (410 aa).

Over residues 48 to 72 the composition is skewed to polar residues; that stretch reads SPNNPDQILTSTGNASITTTPTSPY. Disordered stretches follow at residues 48–109 and 121–159; these read SPNN…STRH and ISPALMNNNGGSHHDSSSGKSVEHSSPQASGHNDTEGDV. A compositionally biased stretch (basic and acidic residues) spans 132 to 143; sequence SHHDSSSGKSVE.

It belongs to the TUB family.

It localises to the cytoplasm. It is found in the nucleus. This Aedes aegypti (Yellowfever mosquito) protein is Protein king tubby 2 (king-tubby2).